A 239-amino-acid polypeptide reads, in one-letter code: Ribonuclease 3 (239 aa).

Residues 12–137 form the RNase III domain; that stretch reads RARLETAIGY…LIAAIYLDGG (126 aa). Glutamate 50 provides a ligand contact to Mg(2+). The active site involves aspartate 54. Positions 123 and 126 each coordinate Mg(2+). Glutamate 126 is an active-site residue. Positions 162–231 constitute a DRBM domain; the sequence is DAKTELQEWA…AMRLLEREGV (70 aa).

It belongs to the ribonuclease III family. In terms of assembly, homodimer. It depends on Mg(2+) as a cofactor.

The protein localises to the cytoplasm. The enzyme catalyses Endonucleolytic cleavage to 5'-phosphomonoester.. In terms of biological role, digests double-stranded RNA. Involved in the processing of primary rRNA transcript to yield the immediate precursors to the large and small rRNAs (23S and 16S). Processes some mRNAs, and tRNAs when they are encoded in the rRNA operon. Processes pre-crRNA and tracrRNA of type II CRISPR loci if present in the organism. This is Ribonuclease 3 from Sinorhizobium fredii (strain NBRC 101917 / NGR234).